The chain runs to 261 residues: Mlc titration factor A (261 aa).

Residues His-111, His-148, His-152, and Glu-211 each coordinate Zn(2+).

The protein belongs to the MtfA family. Interacts with Mlc. It depends on Zn(2+) as a cofactor.

It localises to the cytoplasm. Its function is as follows. Involved in the modulation of the activity of the glucose-phosphotransferase system (glucose-PTS). Interacts with the transcriptional repressor Mlc, preventing its interaction with DNA and leading to the modulation of expression of genes regulated by Mlc, including ptsG, which encodes the PTS system glucose-specific EIICB component. In terms of biological role, shows zinc-dependent metallopeptidase activity. The chain is Mlc titration factor A from Edwardsiella ictaluri (strain 93-146).